Here is an 86-residue protein sequence, read N- to C-terminus: Serine protease inhibitor Kazal-type 2 (86 aa).

Positions 1–16 are cleaved as a signal peptide; it reads MLRLVLLLLVTDFAAS. The region spanning 32 to 86 is the Kazal-like domain; it reads QFRTPDCGHFDFPACPRNLNPVCGTDMNTYSNECTLCMKIREDGSHINIIKDEPC. Intrachain disulfides connect Cys-38–Cys-68, Cys-46–Cys-65, and Cys-54–Cys-86.

Expressed in sperm (at protein level). Expressed in testis but not in ovary, brain, heart, kidney or lung. Within testis, expressed in epididymis and germ cells.

The protein localises to the secreted. Its subcellular location is the cytoplasmic vesicle. It localises to the secretory vesicle. The protein resides in the acrosome. As a strong inhibitor of acrosin, it is required for normal spermiogenesis. It probably hinders premature activation of proacrosin and other proteases, thus preventing the cascade of events leading to spermiogenesis defects. May be involved in the regulation of serine protease-dependent germ cell apoptosis. It also inhibits trypsin. The polypeptide is Serine protease inhibitor Kazal-type 2 (Spink2) (Mus musculus (Mouse)).